A 251-amino-acid chain; its full sequence is Probable transcriptional regulatory protein cu0933 (251 aa).

The disordered stretch occupies residues 56–79; it reads AKKSSVPNDNIERARKRGSGEEAG.

Belongs to the TACO1 family.

The protein localises to the cytoplasm. The sequence is that of Probable transcriptional regulatory protein cu0933 from Corynebacterium urealyticum (strain ATCC 43042 / DSM 7109).